Here is a 51-residue protein sequence, read N- to C-terminus: Sperm protamine P1 (51 aa).

The protein belongs to the protamine P1 family. In terms of tissue distribution, testis.

It localises to the nucleus. Its subcellular location is the chromosome. Its function is as follows. Protamines substitute for histones in the chromatin of sperm during the haploid phase of spermatogenesis. They compact sperm DNA into a highly condensed, stable and inactive complex. The protein is Sperm protamine P1 (PRM1) of Trachypithecus cristatus (Silvered leaf-monkey).